We begin with the raw amino-acid sequence, 150 residues long: MSKQVGLIHSLKDGQSYMEIWPVRKELNAIFPEQRIIKATRFGIKVMPAVAAISVLTQMAFNNYDSLPQAIVVALFAISMPLQGMWWLGSRSNTKLPPALASWYRELHQKITETGFALEPVKARPRYKELAVILNRAFRQLDKTALERWF.

Transmembrane regions (helical) follow at residues 42–62 and 70–90; these read FGIK…MAFN and AIVV…WLGS.

It belongs to the UPF0208 family.

The protein localises to the cell inner membrane. The polypeptide is UPF0208 membrane protein VIBHAR_02941 (Vibrio campbellii (strain ATCC BAA-1116)).